We begin with the raw amino-acid sequence, 210 residues long: MDDEEETYRLWKIRKTIMQLCHDRGYLVTQDELDQTLEEFKAQSGDKPSEGRPRRTDLTVLVAHNDDPTDQMFVFFPEEPKVGIKTIKVYCQRMQEENITRALIVVQQGMTPSAKQSLVDMAPKYILEQFLQQELLINITEHELVPEHVVMTKEEVTELLARYKLRENQLPRIQAGDPVARYFGIKRGQVVKIIRPSETAGRYITYRLVQ.

N-acetylmethionine is present on Met-1. Lys-81 is covalently cross-linked (Glycyl lysine isopeptide (Lys-Gly) (interchain with G-Cter in SUMO2)).

Belongs to the archaeal Rpo5/eukaryotic RPB5 RNA polymerase subunit family. Component of the RNA polymerase I (Pol I), RNA polymerase II (Pol II) and RNA polymerase III (Pol III) complexes consisting of at least 13, 12 and 17 subunits, respectively. Pol I complex consists of a ten-subunit catalytic core composed of POLR1A/RPA1, POLR1B/RPA2, POLR1C/RPAC1, POLR1D/RPAC2, POLR1H/RPA12, POLR2E/RPABC1, POLR2F/RPABC2, POLR2H/RPABC3, POLR2K/RPABC4 and POLR2L/RPABC5; a mobile stalk subunit POLR1F/RPA43 protruding from the core and additional subunits homologous to general transcription factors POLR1E/RPA49 and POLR1G/RPA34. Part of Pol I pre-initiation complex (PIC), in which Pol I core assembles with RRN3 and promoter-bound UTBF and SL1/TIF-IB complex. Pol II complex contains a ten-subunit catalytic core composed of POLR2A/RPB1, POLR2B/RPB2, POLR2C/RPB3, POLR2I/RPB9, POLR2J/RPB11, POLR2E/RPABC1, POLR2F/RPABC2, POLR2H/RPABC3, POLR2K/RPABC4 and POLR2L/RPABC5 and a mobile stalk composed of two subunits POLR2D/RPB4 and POLR2G/RPB7. Part of Pol II(G) complex, in which Pol II core associates with an additional subunit POLR2M; unlike conventional Pol II, Pol II(G) functions as a transcriptional repressor. Part of TBP-based Pol II pre-initiation complex (PIC), in which Pol II core assembles with general transcription factors and other specific initiation factors including GTF2E1, GTF2E2, GTF2F1, GTF2F2, TCEA1, ERCC2, ERCC3, GTF2H2, GTF2H3, GTF2H4, GTF2H5, GTF2A1, GTF2A2, GTF2B and TBP; this large multi-subunit PIC complex mediates DNA unwinding and targets Pol II core to the transcription start site where the first phosphodiester bond forms. In Pol II complex, this subunit is present in 2-fold molar excess over the other subunits. Pol III complex consists of a ten-subunit catalytic core composed of POLR3A/RPC1, POLR3B/RPC2, POLR1C/RPAC1, POLR1D/RPAC2, POLR3K/RPC10, POLR2E/RPABC1, POLR2F/RPABC2, POLR2H/RPABC3, POLR2K/RPABC4 and POLR2L/RPABC5; a mobile stalk composed of two subunits POLR3H/RPC8 and CRCP/RPC9, protruding from the core and functioning primarily in transcription initiation; and additional subunits homologous to general transcription factors of the RNA polymerase II machinery, POLR3C/RPC3-POLR3F/RPC6-POLR3G/RPC7 heterotrimer required for transcription initiation and POLR3D/RPC4-POLR3E/RPC5 heterodimer involved in both transcription initiation and termination. Component of the PAQosome complex which is responsible for the biogenesis of several protein complexes and which consists of R2TP complex members RUVBL1, RUVBL2, RPAP3 and PIH1D1, URI complex members PFDN2, PFDN6, PDRG1, UXT and URI1 as well as ASDURF, POLR2E and DNAAF10/WDR92. Interacts with URI1. As to quaternary structure, (Microbial infection) Interacts with HBV protein X.

Its subcellular location is the nucleus. The protein localises to the nucleolus. Functionally, DNA-dependent RNA polymerase catalyzes the transcription of DNA into RNA using the four ribonucleoside triphosphates as substrates. Common component of RNA polymerases I, II and III which synthesize ribosomal RNA precursors, mRNA precursors and many functional non-coding RNAs, and small RNAs, such as 5S rRNA and tRNAs, respectively. Pol II is the central component of the basal RNA polymerase II transcription machinery. Pols are composed of mobile elements that move relative to each other. In Pol II, POLR2E/RPABC1 is part of the lower jaw surrounding the central large cleft and thought to grab the incoming DNA template. The polypeptide is DNA-directed RNA polymerases I, II, and III subunit RPABC1 (Homo sapiens (Human)).